We begin with the raw amino-acid sequence, 790 residues long: PGC-1 and ERR-induced regulator in muscle protein 1 (790 aa).

Disordered stretches follow at residues 38 to 391 (LLSS…TPIS), 425 to 449 (VASS…STPV), 507 to 545 (SVAG…EAVA), and 626 to 648 (QRSR…APIP). A compositionally biased stretch (low complexity) spans 40-52 (SSDIDQGDSSGSS). Composition is skewed to polar residues over residues 80-89 (ATQQPVSRSQ) and 98-107 (TGQQTPSTSA). Residues 111–123 (APPSLGPGASPPS) are compositionally biased toward low complexity. Pro residues predominate over residues 146–157 (APRPPGEPPGSP). The segment covering 158–169 (KSPGHSTGSQRP) has biased composition (low complexity). The segment covering 170-179 (PDSPGAPPRS) has biased composition (pro residues). Residues 366–391 (KPQSDTAVSTPASEPQSSVALSTPIS) are compositionally biased toward polar residues. The segment covering 515–532 (KPGSGQASARPSAPQTAT) has biased composition (polar residues). Pro residues predominate over residues 635–648 (EPLPRADPVPAPIP).

In terms of tissue distribution, muscle-specific expression is increased by endurance exercise.

The protein localises to the cytoplasm. It is found in the nucleus. In terms of biological role, regulates the expression of selective PPARGC1A/B and ESRRA/B/G target genes with roles in glucose and lipid metabolism, energy transfer, contractile function, muscle mitochondrial biogenesis and oxidative capacity. Required for the efficient induction of MT-CO2, MT-CO3, COX4I1, TFB1M, TFB2M, POLRMT and SIRT3 by PPARGC1A. Positively regulates the PPARGC1A/ESRRG-induced expression of CKMT2, TNNI3 and SLC2A4 and negatively regulates the PPARGC1A/ESRRG-induced expression of PDK4. This Homo sapiens (Human) protein is PGC-1 and ERR-induced regulator in muscle protein 1 (PERM1).